The primary structure comprises 277 residues: Phosphate import ATP-binding protein PstB 1 (277 aa).

One can recognise an ABC transporter domain in the interval 27 to 272; sequence LRVRDLAVSY…PSHELTAAYI (246 aa). Position 59–66 (59–66) interacts with ATP; the sequence is GPSGCGKT.

This sequence belongs to the ABC transporter superfamily. Phosphate importer (TC 3.A.1.7) family. The complex is composed of two ATP-binding proteins (PstB), two transmembrane proteins (PstC and PstA) and a solute-binding protein (PstS).

It localises to the cell inner membrane. It catalyses the reaction phosphate(out) + ATP + H2O = ADP + 2 phosphate(in) + H(+). Its function is as follows. Part of the ABC transporter complex PstSACB involved in phosphate import. Responsible for energy coupling to the transport system. This chain is Phosphate import ATP-binding protein PstB 1, found in Nitrosococcus oceani (strain ATCC 19707 / BCRC 17464 / JCM 30415 / NCIMB 11848 / C-107).